We begin with the raw amino-acid sequence, 148 residues long: MAETKTKVTLVGTVLAKPGTEFVYEGESPECETCKVKKACNNLNRGHRYRIITVRSTHHDCAVHLNGATAVEVMEAPVTMLISADMAMINSKIKVEFSCNKTECRSYSLCRPDGVVEGEKYVVADVLGNASDICGKGRALKLVEIRPA.

This sequence belongs to the UPF0179 family.

The chain is UPF0179 protein Mboo_1959 from Methanoregula boonei (strain DSM 21154 / JCM 14090 / 6A8).